The chain runs to 862 residues: Eukaryotic translation initiation factor 3 subunit C (862 aa).

The disordered stretch occupies residues 1–81; it reads MSSRFFYGGG…EEEEKVTVVK (81 aa). Residues 17-54 are compositionally biased toward acidic residues; that stretch reads SSDEEELYSDREEEEKSEEEESSEEEDETSEEEESDEE. Basic and acidic residues predominate over residues 55–65; the sequence is TGAKKFLKDVA. Residues 66–75 show a composition bias toward acidic residues; that stretch reads SDSEEEEEEE. The PCI domain occupies 600 to 774; that stretch reads FHMHINLELL…NAIVFRKGVE (175 aa). The tract at residues 813–862 is disordered; that stretch reads RDQGAGARGGRGSGRGGQARGGPRFPGGQQGRRPGGQQFGGGALGGAIKA. The segment covering 818 to 862 has biased composition (gly residues); that stretch reads GARGGRGSGRGGQARGGPRFPGGQQGRRPGGQQFGGGALGGAIKA.

The protein belongs to the eIF-3 subunit C family. In terms of assembly, component of the eukaryotic translation initiation factor 3 (eIF-3) complex.

The protein localises to the cytoplasm. Its function is as follows. Component of the eukaryotic translation initiation factor 3 (eIF-3) complex, which is involved in protein synthesis of a specialized repertoire of mRNAs and, together with other initiation factors, stimulates binding of mRNA and methionyl-tRNAi to the 40S ribosome. The eIF-3 complex specifically targets and initiates translation of a subset of mRNAs involved in cell proliferation. This is Eukaryotic translation initiation factor 3 subunit C (nip1) from Neosartorya fischeri (strain ATCC 1020 / DSM 3700 / CBS 544.65 / FGSC A1164 / JCM 1740 / NRRL 181 / WB 181) (Aspergillus fischerianus).